Reading from the N-terminus, the 1014-residue chain is Beta-galactosidase (1014 aa).

Glu-460 acts as the Proton donor in catalysis. Glu-527 acts as the Nucleophile in catalysis.

This sequence belongs to the glycosyl hydrolase 2 family.

The enzyme catalyses Hydrolysis of terminal non-reducing beta-D-galactose residues in beta-D-galactosides.. This chain is Beta-galactosidase (lacZ), found in Halalkalibacterium halodurans (strain ATCC BAA-125 / DSM 18197 / FERM 7344 / JCM 9153 / C-125) (Bacillus halodurans).